Here is a 69-residue protein sequence, read N- to C-terminus: Large ribosomal subunit protein bL31 (69 aa).

Residues cysteine 16, cysteine 18, cysteine 37, and cysteine 40 each contribute to the Zn(2+) site.

This sequence belongs to the bacterial ribosomal protein bL31 family. Type A subfamily. Part of the 50S ribosomal subunit. The cofactor is Zn(2+).

In terms of biological role, binds the 23S rRNA. The polypeptide is Large ribosomal subunit protein bL31 (Buchnera aphidicola subsp. Baizongia pistaciae (strain Bp)).